We begin with the raw amino-acid sequence, 103 residues long: Small ribosomal subunit protein uS10 (103 aa).

Belongs to the universal ribosomal protein uS10 family. As to quaternary structure, part of the 30S ribosomal subunit.

Involved in the binding of tRNA to the ribosomes. The chain is Small ribosomal subunit protein uS10 from Buchnera aphidicola subsp. Cinara cedri (strain Cc).